The chain runs to 443 residues: D(2) dopamine receptor (443 aa).

At 1 to 37 the chain is on the extracellular side; sequence MDPLNLSWYDDDLERQNWSRPFNGSDGKADRPHYNYY. Residues asparagine 5, asparagine 17, and asparagine 23 are each glycosylated (N-linked (GlcNAc...) asparagine). The helical transmembrane segment at 38-60 threads the bilayer; it reads ATLLTLLIAVIVFGNVLVCMAVS. The Cytoplasmic segment spans residues 61-70; it reads REKALQTTTN. A helical membrane pass occupies residues 71-93; the sequence is YLIVSLAVADLLVATLVMPWVVY. Residues 94–108 lie on the Extracellular side of the membrane; it reads LEVVGEWKFSRIHCD. Cysteine 107 and cysteine 182 are oxidised to a cystine. A helical transmembrane segment spans residues 109–130; the sequence is IFVTLDVMMCTASILNLCAISI. The Cytoplasmic segment spans residues 131–151; that stretch reads DRYTAVAMPMLYNTRYSSKRR. A helical transmembrane segment spans residues 152–172; it reads VTVMISIVWVLSFTISCPLLF. Over 173–188 the chain is Extracellular; the sequence is GLNNADQNECIIANPA. A helical membrane pass occupies residues 189 to 213; the sequence is FVVYSSIVSFYVPFIVTLLVYIKIY. Positions 211–373 are interaction with PPP1R9B; it reads KIYIVLRRRR…SQQKEKKATQ (163 aa). The Cytoplasmic portion of the chain corresponds to 214-373; sequence IVLRRRRKRV…SQQKEKKATQ (160 aa). Positions 281 to 332 are disordered; that stretch reads MEMLSSTSPPERTRYSPIPPSHHQLTLPDPSHHGLHSTPDSPAKPEKNGHAK. Over residues 323–332 the composition is skewed to basic and acidic residues; the sequence is AKPEKNGHAK. The helical transmembrane segment at 374 to 395 threads the bilayer; it reads MLAIVLGVFIICWLPFFITHIL. At 396-409 the chain is on the extracellular side; it reads NIHCDCNIPPVLYS. A disulfide bridge links cysteine 399 with cysteine 401. A helical transmembrane segment spans residues 410 to 431; sequence AFTWLGYVNSAVNPIIYTTFNI. The Cytoplasmic portion of the chain corresponds to 432–443; it reads EFRKAFLKILHC. The S-palmitoyl cysteine moiety is linked to residue cysteine 443.

Belongs to the G-protein coupled receptor 1 family. In terms of assembly, forms homo- and heterooligomers with DRD4. The interaction with DRD4 may modulate agonist-induced downstream signaling. Interacts with CADPS and CADPS2. Interacts with GPRASP1, PPP1R9B and CLIC6. Interacts with ARRB2. Interacts with HTR2A. Interacts with GNAI2 isoform sGi2, the interaction allows the creation of an intracellular pool of DRD2 that can be released to cell surface upon agonist stimulation. Interacts with DRD1. Interacts with KCNA2. Post-translationally, palmitoylated. Palmitoylation which is required for proper localization to the plasma membrane and stability of the receptor could be carried on by ZDHHC4, ZDHHC3 and ZDHHC8. In terms of tissue distribution, expressed in the anterior pituitary gland.

The protein localises to the cell membrane. It localises to the golgi apparatus membrane. Its function is as follows. Dopamine receptor whose activity is mediated by G proteins which inhibit adenylyl cyclase. Positively regulates postnatal regression of retinal hyaloid vessels via suppression of VEGFR2/KDR activity, downstream of OPN5. This is D(2) dopamine receptor (DRD2) from Homo sapiens (Human).